Consider the following 96-residue polypeptide: UPF0235 protein VCM66_0443 (96 aa).

This sequence belongs to the UPF0235 family.

The protein is UPF0235 protein VCM66_0443 of Vibrio cholerae serotype O1 (strain M66-2).